The primary structure comprises 235 residues: Small ribosomal subunit protein uS2c (235 aa).

It belongs to the universal ribosomal protein uS2 family.

The protein resides in the plastid. It localises to the chloroplast. This is Small ribosomal subunit protein uS2c (rps2) from Cryptomeria japonica (Japanese cedar).